A 71-amino-acid polypeptide reads, in one-letter code: Pro-MCH (71 aa).

Residues 1–20 (AKMSLSSYILILTLVLFSQG) form the signal peptide.

It belongs to the melanin-concentrating hormone family.

It is found in the secreted. The polypeptide is Pro-MCH (PMCH) (Carlito syrichta (Philippine tarsier)).